The following is a 301-amino-acid chain: Probable alpha-L-glutamate ligase 1 (301 aa).

One can recognise an ATP-grasp domain in the interval 104–287; it reads LQLLSRKGIG…VTEPIVEYIE (184 aa). Residues K141, 178-179, D187, and 211-213 contribute to the ATP site; these read EY and RSN. Positions 248, 260, and 262 each coordinate Mg(2+). Mn(2+) is bound by residues D248, E260, and N262.

It belongs to the RimK family. Requires Mg(2+) as cofactor. The cofactor is Mn(2+).

This chain is Probable alpha-L-glutamate ligase 1, found in Shewanella oneidensis (strain ATCC 700550 / JCM 31522 / CIP 106686 / LMG 19005 / NCIMB 14063 / MR-1).